Here is a 434-residue protein sequence, read N- to C-terminus: Na(+)/H(+) antiporter NhaA 1 (434 aa).

Residues 1–15 (MISPNPALPTPPHAP) are compositionally biased toward pro residues. Positions 1–21 (MISPNPALPTPPHAPTAPGRG) are disordered. The next 12 helical transmembrane spans lie at 34 to 54 (GGIL…SPAA), 74 to 94 (LSVS…VVGL), 112 to 132 (ALPI…FTLI), 143 to 163 (GWAI…AVVG), 173 to 193 (FLLT…AVFY), 196 to 216 (GIAF…GILV), 222 to 242 (AWYV…ASGI), 245 to 265 (TIAG…RAGV), 294 to 314 (IAVP…LEGL), 326 to 346 (IIVA…LLVA), 362 to 382 (VLGL…VGEL), and 393 to 413 (AVKV…GTLL).

Belongs to the NhaA Na(+)/H(+) (TC 2.A.33) antiporter family.

The protein localises to the cell membrane. The enzyme catalyses Na(+)(in) + 2 H(+)(out) = Na(+)(out) + 2 H(+)(in). Na(+)/H(+) antiporter that extrudes sodium in exchange for external protons. This is Na(+)/H(+) antiporter NhaA 1 from Clavibacter michiganensis subsp. michiganensis (strain NCPPB 382).